Consider the following 131-residue polypeptide: Small ribosomal subunit protein uS19 (131 aa).

The protein belongs to the universal ribosomal protein uS19 family.

Functionally, protein S19 forms a complex with S13 that binds strongly to the 16S ribosomal RNA. This is Small ribosomal subunit protein uS19 from Cenarchaeum symbiosum (strain A).